Here is a 231-residue protein sequence, read N- to C-terminus: Deoxyribose-phosphate aldolase (231 aa).

The active-site Proton donor/acceptor is aspartate 86. The Schiff-base intermediate with acetaldehyde role is filled by lysine 147. Catalysis depends on lysine 172, which acts as the Proton donor/acceptor. Positions 206-231 are disordered; that stretch reads WQAETAGETVTEPESDRDGADTTDGY.

This sequence belongs to the DeoC/FbaB aldolase family. DeoC type 1 subfamily.

It is found in the cytoplasm. The enzyme catalyses 2-deoxy-D-ribose 5-phosphate = D-glyceraldehyde 3-phosphate + acetaldehyde. It participates in carbohydrate degradation; 2-deoxy-D-ribose 1-phosphate degradation; D-glyceraldehyde 3-phosphate and acetaldehyde from 2-deoxy-alpha-D-ribose 1-phosphate: step 2/2. Its function is as follows. Catalyzes a reversible aldol reaction between acetaldehyde and D-glyceraldehyde 3-phosphate to generate 2-deoxy-D-ribose 5-phosphate. The chain is Deoxyribose-phosphate aldolase from Haloarcula marismortui (strain ATCC 43049 / DSM 3752 / JCM 8966 / VKM B-1809) (Halobacterium marismortui).